The sequence spans 356 residues: DNA integrity scanning protein DisA (356 aa).

The 139-residue stretch at 11 to 149 folds into the DAC domain; sequence VHTMRDTLQR…EGKSHILEEP (139 aa). ATP-binding positions include Gly78, Leu96, and 109–113; that span reads TRHRS.

The protein belongs to the DisA family. In terms of assembly, homooctamer. Mg(2+) serves as cofactor.

The enzyme catalyses 2 ATP = 3',3'-c-di-AMP + 2 diphosphate. In terms of biological role, participates in a DNA-damage check-point. DisA forms globular foci that rapidly scan along the chromosomes searching for lesions. Functionally, also has diadenylate cyclase activity, catalyzing the condensation of 2 ATP molecules into cyclic di-AMP (c-di-AMP). c-di-AMP likely acts as a signaling molecule that may couple DNA integrity with a cellular process. In Corynebacterium efficiens (strain DSM 44549 / YS-314 / AJ 12310 / JCM 11189 / NBRC 100395), this protein is DNA integrity scanning protein DisA.